The following is a 241-amino-acid chain: MSMLCYTLITAFLIGIWAAPKSEDNVPLGSPATSDLSDTSCAQTHEGLKTSRNTDQRHPAPQKAEDQELRTAANIIVDPKLFQKRQFQSPRVLFSTQPPLLSRDEESVEFLDNEDSLNRNIRAKREDHPVHNLGEHSVCDSVSAWVTKTTATDIKGNTVTVMENVNLDNKVYKQYFFETKCKNPNPVPSGCRGIDSSHWNSYCTETDTFIKALTMEGNQASWRFIRIDTACVCVITKKTGN.

Residues Met-1 to Ala-18 form the signal peptide. The propeptide occupies Ala-19–Arg-125. Positions Gly-47–Gln-67 are disordered. 3 disulfide bridges follow: Cys-139-Cys-203, Cys-181-Cys-231, and Cys-191-Cys-233.

This sequence belongs to the NGF-beta family. As to quaternary structure, homodimer; non-covalently linked. In terms of tissue distribution, expressed by the venom gland.

The protein resides in the secreted. Nerve growth factor is important for the development and maintenance of the sympathetic and sensory nervous systems. It stimulates division and differentiation of sympathetic and embryonic sensory neurons as well as basal forebrain cholinergic neurons in the brain. Its relevance in the snake venom is not clear. However, it has been shown to inhibit metalloproteinase-dependent proteolysis of platelet glycoprotein Ib alpha, suggesting a metalloproteinase inhibition to prevent metalloprotease autodigestion and/or protection against prey proteases. Binds a lipid between the two protein chains in the homodimer. The lipid-bound form promotes histamine relase from mouse mast cells, contrary to the lipid-free form. In Naja sputatrix (Malayan spitting cobra), this protein is Venom nerve growth factor 2.